The following is a 290-amino-acid chain: MKRTALKIGYIGTNFHGFQRQPDLRTVEEELIYHLRKLGYIDDLKKSRFRIAGRTDAGVHSLGNVISFQSEKEVRVNEINNSLPDDIQILAKAPVRFGFKPRYAEMRQYRYVLFRSDLDLYKLNEVAEIFKGTHNFTNFTKRFQKTTTRTIDDIKITKANLNDYHKKEFPNLHDTLSPVFVDIYGESFLWNMVRKMMRVFVDVAIGKLSLEKVEELLNPAENDPRANIKVLDPDYLILMDIKYDGVKFVYDDYACERFKRNLVDSLGDLQRKYAIRESMIKSLEDLERIN.

Residue Asp56 is the Nucleophile of the active site. A substrate-binding site is contributed by Tyr109.

The protein belongs to the tRNA pseudouridine synthase TruA family.

It carries out the reaction uridine(38/39/40) in tRNA = pseudouridine(38/39/40) in tRNA. Its function is as follows. Formation of pseudouridine at positions 38, 39 and 40 in the anticodon stem and loop of transfer RNAs. This is tRNA pseudouridine synthase A from Methanobrevibacter smithii (strain ATCC 35061 / DSM 861 / OCM 144 / PS).